Here is an 86-residue protein sequence, read N- to C-terminus: Protein Tat (86 aa).

The segment at 1-24 (MEPVDPRLEPWKHPGSQPKTACTN) is interaction with human CREBBP. Positions 1–48 (MEPVDPRLEPWKHPGSQPKTACTNCYCKKCCFHCQVCFITKALGISYG) are transactivation. Cysteine 22, cysteine 25, and cysteine 27 together coordinate Zn(2+). The tract at residues 22–37 (CTNCYCKKCCFHCQVC) is cysteine-rich. At lysine 28 the chain carries N6-acetyllysine; by host PCAF. Zn(2+) is bound by residues cysteine 30, histidine 33, cysteine 34, and cysteine 37. The segment at 38 to 48 (FITKALGISYG) is core. Residues 48 to 58 (GRKKRRQRRRP) show a composition bias toward basic residues. Residues 48 to 86 (GRKKRRQRRRPPQGSQTHQVSLSKQPTSQSRGDPTGPKE) form a disordered region. The Nuclear localization signal, RNA-binding (TAR), and protein transduction signature appears at 49–57 (RKKRRQRRR). An interaction with the host capping enzyme RNGTT region spans residues 49–86 (RKKRRQRRRPPQGSQTHQVSLSKQPTSQSRGDPTGPKE). An N6-acetyllysine; by host EP300 and GCN5L2 mark is found at lysine 50 and lysine 51. Arginine 52 and arginine 53 each carry asymmetric dimethylarginine; by host PRMT6. The span at 62 to 79 (SQTHQVSLSKQPTSQSRG) shows a compositional bias: polar residues. Residue lysine 71 forms a Glycyl lysine isopeptide (Lys-Gly) (interchain with G-Cter in ubiquitin) linkage. The Cell attachment site motif lies at 78-80 (RGD).

This sequence belongs to the lentiviruses Tat family. Interacts with host CCNT1. Associates with the P-TEFb complex composed at least of Tat, P-TEFb (CDK9 and CCNT1), TAR RNA, RNA Pol II. Recruits the HATs CREBBP, TAF1/TFIID, EP300, PCAF and GCN5L2. Interacts with host KAT5/Tip60; this interaction targets the latter to degradation. Interacts with the host deacetylase SIRT1. Interacts with host capping enzyme RNGTT; this interaction stimulates RNGTT. Binds to host KDR, and to the host integrins ITGAV/ITGB3 and ITGA5/ITGB1. Interacts with host KPNB1/importin beta-1 without previous binding to KPNA1/importin alpha-1. Interacts with EIF2AK2. Interacts with host nucleosome assembly protein NAP1L1; this interaction may be required for the transport of Tat within the nucleus, since the two proteins interact at the nuclear rim. Interacts with host C1QBP/SF2P32; this interaction involves lysine-acetylated Tat. Interacts with the host chemokine receptors CCR2, CCR3 and CXCR4. Interacts with host DPP4/CD26; this interaction may trigger an anti-proliferative effect. Interacts with host LDLR. Interacts with the host extracellular matrix metalloproteinase MMP1. Interacts with host PRMT6; this interaction mediates Tat's methylation. Interacts with, and is ubiquitinated by MDM2/Hdm2. Interacts with host PSMC3 and HTATIP2. Interacts with STAB1; this interaction may overcome SATB1-mediated repression of IL2 and IL2RA (interleukin) in T cells by binding to the same domain than HDAC1. Interacts (when acetylated) with human CDK13, thereby increasing HIV-1 mRNA splicing and promoting the production of the doubly spliced HIV-1 protein Nef. Interacts with host TBP; this interaction modulates the activity of transcriptional pre-initiation complex. Interacts with host RELA. Interacts with host PLSCR1; this interaction negatively regulates Tat transactivation activity by altering its subcellular distribution. Asymmetrical arginine methylation by host PRMT6 seems to diminish the transactivation capacity of Tat and affects the interaction with host CCNT1. Post-translationally, acetylation by EP300, CREBBP, GCN5L2/GCN5 and PCAF regulates the transactivation activity of Tat. EP300-mediated acetylation of Lys-50 promotes dissociation of Tat from the TAR RNA through the competitive binding to PCAF's bromodomain. In addition, the non-acetylated Tat's N-terminus can also interact with PCAF. PCAF-mediated acetylation of Lys-28 enhances Tat's binding to CCNT1. Lys-50 is deacetylated by SIRT1. In terms of processing, polyubiquitination by host MDM2 does not target Tat to degradation, but activates its transactivation function and fosters interaction with CCNT1 and TAR RNA. Phosphorylated by EIF2AK2 on serine and threonine residues adjacent to the basic region important for TAR RNA binding and function. Phosphorylation of Tat by EIF2AK2 is dependent on the prior activation of EIF2AK2 by dsRNA.

It is found in the host nucleus. Its subcellular location is the host nucleolus. The protein resides in the host cytoplasm. It localises to the secreted. Functionally, transcriptional activator that increases RNA Pol II processivity, thereby increasing the level of full-length viral transcripts. Recognizes a hairpin structure at the 5'-LTR of the nascent viral mRNAs referred to as the transactivation responsive RNA element (TAR) and recruits the cyclin T1-CDK9 complex (P-TEFb complex) that will in turn hyperphosphorylate the RNA polymerase II to allow efficient elongation. The CDK9 component of P-TEFb and other Tat-activated kinases hyperphosphorylate the C-terminus of RNA Pol II that becomes stabilized and much more processive. Other factors such as HTATSF1/Tat-SF1, SUPT5H/SPT5, and HTATIP2 are also important for Tat's function. Besides its effect on RNA Pol II processivity, Tat induces chromatin remodeling of proviral genes by recruiting the histone acetyltransferases (HATs) CREBBP, EP300 and PCAF to the chromatin. This also contributes to the increase in proviral transcription rate, especially when the provirus integrates in transcriptionally silent region of the host genome. To ensure maximal activation of the LTR, Tat mediates nuclear translocation of NF-kappa-B by interacting with host RELA. Through its interaction with host TBP, Tat may also modulate transcription initiation. Tat can reactivate a latently infected cell by penetrating in it and transactivating its LTR promoter. In the cytoplasm, Tat is thought to act as a translational activator of HIV-1 mRNAs. Its function is as follows. Extracellular circulating Tat can be endocytosed by surrounding uninfected cells via the binding to several surface receptors such as CD26, CXCR4, heparan sulfate proteoglycans (HSPG) or LDLR. Neurons are rarely infected, but they internalize Tat via their LDLR. Through its interaction with nuclear HATs, Tat is potentially able to control the acetylation-dependent cellular gene expression. Modulates the expression of many cellular genes involved in cell survival, proliferation or in coding for cytokines or cytokine receptors. Tat plays a role in T-cell and neurons apoptosis. Tat induced neurotoxicity and apoptosis probably contribute to neuroAIDS. Circulating Tat also acts as a chemokine-like and/or growth factor-like molecule that binds to specific receptors on the surface of the cells, affecting many cellular pathways. In the vascular system, Tat binds to ITGAV/ITGB3 and ITGA5/ITGB1 integrins dimers at the surface of endothelial cells and competes with bFGF for heparin-binding sites, leading to an excess of soluble bFGF. This chain is Protein Tat, found in Homo sapiens (Human).